A 743-amino-acid chain; its full sequence is DEAD-box ATP-dependent RNA helicase 3B, chloroplastic (743 aa).

The N-terminal 37 residues, 1–37 (MASLTLPALALALSNPGAVRLRAAAFRCWALRRRGWA), are a transit peptide targeting the chloroplast. A disordered region spans residues 60–79 (GSDDEDGEGPYGSDADEGFE). Over residues 61–79 (SDDEDGEGPYGSDADEGFE) the composition is skewed to acidic residues. A Q motif motif is present at residues 88–116 (LAIARLGLPDELVATLEKRGITHLFPIQR). Positions 119-295 (LIPALEGRDL…RRYLNNPLTI (177 aa)) constitute a Helicase ATP-binding domain. An ATP-binding site is contributed by 132 to 139 (AKTGTGKT). Positions 243–246 (DEAD) match the DEAD box motif. The Helicase C-terminal domain maps to 324–469 (VLSDLITVYA…ISPPSIEEVL (146 aa)). The tract at residues 606–719 (LTKISKLPAL…RSSSFGGRES (114 aa)) is disordered. Gly residues predominate over residues 642–653 (GGGASRGRGGWD). Basic and acidic residues predominate over residues 657 to 671 (EDRFRRGGRSLRSDN). Low complexity predominate over residues 688–719 (RSSSFGSRSSSYSSRGSPSFGGRSSSFGGRES). The segment at 725–742 (GACFNCGESGHRATDCPN) adopts a CCHC-type zinc-finger fold.

This sequence belongs to the DEAD box helicase family. DDX21/DDX50 subfamily.

The protein localises to the plastid. It is found in the chloroplast stroma. It carries out the reaction ATP + H2O = ADP + phosphate + H(+). In terms of biological role, nuclear genome-encoded factor involved in ribosome biogenesis in chloroplasts. Binds specific group II introns in chloroplasts and facilitates their splicing. Is required for rRNA maturation in plastids and may contribute to the assembly of the large (50S) ribosomal subunit. Required for normal development of chloroplasts. This chain is DEAD-box ATP-dependent RNA helicase 3B, chloroplastic, found in Zea mays (Maize).